The primary structure comprises 243 residues: Protein HUA2 (243 aa).

The protein localises to the cytoplasm. Functionally, may have a role in actin patch assembly. The sequence is that of Protein HUA2 (HUA2) from Saccharomyces cerevisiae (strain ATCC 204508 / S288c) (Baker's yeast).